The sequence spans 385 residues: Transcription termination factor 2, mitochondrial (385 aa).

Residues 1–35 (MPWRLPTGHQLCRLCLLRKPRPALKIKPSSACVTY) constitute a mitochondrion transit peptide.

Belongs to the mTERF family. Monomer.

The protein localises to the mitochondrion matrix. The protein resides in the mitochondrion nucleoid. In terms of biological role, binds mitochondrial DNA and plays a role in the regulation of transcription of mitochondrial mRNA and rRNA species. This chain is Transcription termination factor 2, mitochondrial (Mterf2), found in Mus musculus (Mouse).